Here is a 401-residue protein sequence, read N- to C-terminus: MGFFGRLFGSKKQEKATPNRRRWSFATRSSHPENDSSSHSSKRRGDEDVLNGDKHAIAVAAATAAVAEAALAAARAAAEVVRLTNGGRNSSVKQISRSNRRWSQEYKAAMKIQSAFRGYLARRALRALKALVKLQALVKGHIVRKQTADMLRRMQTLVRLQARARASRSSHVSDSSHPPTLMIPSSPQSFHARCVSEAEYSKVIAMDHHHNNHRSPMGSSRLLDQWRTEESLWSAPKYNEDDDKILEVDTWKPHFRESPRKRGSLVVPTSVENSPQLRSRTGSSSGGSRRKTPFTPARSEYEYYSGYHPNYMANTESYKAKVRSQSAPRQRLQDLPSESGYKRSIQGQYYYYTPAAERSFDQRSDNGIAGYRGVSDGLDRNQSDKSKMYTSFFSSNPLFFQ.

Residues 1–48 (MGFFGRLFGSKKQEKATPNRRRWSFATRSSHPENDSSSHSSKRRGDED) are disordered. Positions 105-121 (EYKAAMKIQSAFRGYLA) are calmodulin-binding. 2 consecutive IQ domains span residues 105–133 (EYKA…ALVK) and 134–156 (LQAL…RMQT). Composition is skewed to low complexity over residues 165–176 (RASRSSHVSDSS) and 278–287 (RSRTGSSSGG). Disordered regions lie at residues 165–186 (RASR…IPSS) and 258–296 (SPRK…PFTP).

This sequence belongs to the IQD family. In terms of assembly, binds to multiple calmodulin (CaM) in the presence of Ca(2+) and CaM-like proteins.

It is found in the nucleus. The protein resides in the nuclear body. Its subcellular location is the cell membrane. In terms of biological role, may be involved in cooperative interactions with calmodulins or calmodulin-like proteins. Recruits calmodulin proteins to microtubules, thus being a potential scaffold in cellular signaling and trafficking. May associate with nucleic acids and regulate gene expression at the transcriptional or post-transcriptional level. This is Protein IQ-DOMAIN 24 from Arabidopsis thaliana (Mouse-ear cress).